An 88-amino-acid chain; its full sequence is U-scoloptoxin(XY)-Er1b (88 aa).

An N-terminal signal peptide occupies residues 1–24; that stretch reads MASQVVLSFALVVVLAVFVGQVDS. Residues 66–88 form a disordered region; it reads RPELSPGALDDSSEEKDNEASLA. Residues 79–88 constitute a propeptide that is removed on maturation; it reads EEKDNEASLA.

The protein belongs to the scoloptoxin-XY family. In terms of processing, contains 3 disulfide bonds. Expressed by the venom gland.

It is found in the secreted. This is U-scoloptoxin(XY)-Er1b from Ethmostigmus rubripes (Giant centipede).